We begin with the raw amino-acid sequence, 1365 residues long: Histone-lysine N-methyltransferase NSD2 (1365 aa).

Phosphothreonine is present on residues Thr110 and Thr114. Residue Ser121 is modified to Phosphoserine. The disordered stretch occupies residues 149-169 (ADVSQSEENEQKSDNKTRRNR). Ser172 is modified (phosphoserine). The 65-residue stretch at 222–286 (VGDLVWSKVS…FEKSLVAFEG (65 aa)) folds into the PWWP 1 domain. 3 disordered regions span residues 373 to 455 (MVDS…RKGD), 513 to 567 (QSEE…DKTA), and 594 to 658 (CKPL…SKKS). At Ser376 the chain carries Phosphoserine. Thr422 is modified (phosphothreonine). Residues 453–521 (KGDSAAQFLV…AQSEEDSGNG (69 aa)) constitute a DNA-binding region (HMG box). Basic and acidic residues predominate over residues 552–567 (DKHSLRKRETITDKTA). Positions 603-623 (ASATASSALGFNKSSSPSASL) are enriched in polar residues. Residues 632–648 (PGDEPSESPYESADETQ) show a composition bias toward acidic residues. PHD-type zinc fingers lie at residues 667 to 713 (EYVC…CASG), 714 to 770 (IHSC…CHAS), and 831 to 875 (VSWC…CRAG). One can recognise a PWWP 2 domain in the interval 880–942 (FQDIIWVKLG…QARVFPYMEG (63 aa)). The AWS domain maps to 1011–1061 (SEIPKCNCKPTDENPCGSDSECLNRMLMFECHPQVCPAGEYCQNQCFTKRQ). The Zn(2+) site is built by Cys1016, Cys1018, Cys1026, Cys1032, Cys1041, Cys1046, and Cys1052. The region spanning 1063-1180 (PETKIIKTDG…AGTELTFNYN (118 aa)) is the SET domain. Residues Trp1075, 1115 to 1118 (THFY), and 1141 to 1142 (NH) each bind S-adenosyl-L-methionine. Residue Cys1144 participates in Zn(2+) binding. Asn1186 contacts S-adenosyl-L-methionine. The 17-residue stretch at 1187–1203 (EKTVCRCGASNCSGFLG) folds into the Post-SET domain. Cys1191 contributes to the Zn(2+) binding site. Arg1192 provides a ligand contact to S-adenosyl-L-methionine. Positions 1193 and 1198 each coordinate Zn(2+). Positions 1206 to 1232 (PKTSASLSSEEKGKKAKKKTRRRRAKG) are disordered. Basic residues predominate over residues 1219–1230 (KKAKKKTRRRRA). The segment at 1239–1286 (EDECFRCGDGGQLVLCDRKFCTKAYHLSCLGLGKRPFGKWECPWHHCD) adopts a PHD-type 4; atypical zinc-finger fold. A disordered region spans residues 1329–1365 (RADSSSSTKTEKPFPESLKSKGKRKKRRCWRRVTDGK). A compositionally biased stretch (basic residues) spans 1348-1359 (SKGKRKKRRCWR).

It belongs to the class V-like SAM-binding methyltransferase superfamily. Histone-lysine methyltransferase family. SET2 subfamily. As to quaternary structure, interacts with HDAC1. Interacts (via PHD-type zinc fingers 1, 2 and 3) with SALL1. Interacts (via PHD-type 1, 2 and 3) with SALL4. Interacts with NANOG. Interacts with OGT. Interacts (via HMG box) with NKX2-5. During B-cell development, expressed in early B2 cell progenitors (pre- and pro-B cells) with a decrease in expression at later stages.

Its subcellular location is the nucleus. The protein resides in the chromosome. It catalyses the reaction L-lysyl(36)-[histone H3] + S-adenosyl-L-methionine = N(6)-methyl-L-lysyl(36)-[histone H3] + S-adenosyl-L-homocysteine + H(+). The enzyme catalyses L-lysyl(36)-[histone H3] + 2 S-adenosyl-L-methionine = N(6),N(6)-dimethyl-L-lysyl(36)-[histone H3] + 2 S-adenosyl-L-homocysteine + 2 H(+). Functionally, histone methyltransferase which specifically dimethylates nucleosomal histone H3 at 'Lys-36' (H3K36me2). Also monomethylates nucleosomal histone H3 at 'Lys-36' (H3K36me) in vitro. Does not trimethylate nucleosomal histone H3 at 'Lys-36' (H3K36me3). However, specifically trimethylates histone H3 at 'Lys-36' (H3K36me3) at euchromatic regions in embryonic stem (ES) cells. By methylating histone H3 at 'Lys-36', involved in the regulation of gene transcription during various biological processes. In ES cells, associates with developmental transcription factors such as SALL1 and represses inappropriate gene transcription mediated by histone deacetylation. During heart development, associates with transcription factor NKX2-5 to repress transcription of NKX2-5 target genes. Plays an essential role in adipogenesis, by regulating expression of genes involved in pre-adipocyte differentiation. During T-cell receptor (TCR) and CD28-mediated T-cell activation, promotes the transcription of transcription factor BCL6 which is required for follicular helper T (Tfh) cell differentiation. During B-cell development, required for the generation of the B1 lineage. During B2 cell activation, may contribute to the control of isotype class switch recombination (CRS), splenic germinal center formation, and the humoral immune response. Plays a role in class switch recombination of the immunoglobulin heavy chain (IgH) locus during B-cell activation. By regulating the methylation of histone H3 at 'Lys-36' and histone H4 at 'Lys-20' at the IgH locus, involved in TP53BP1 recruitment to the IgH switch region and promotes the transcription of IgA. In terms of biological role, histone methyltransferase which specifically dimethylates nucleosomal histone H3 at 'Lys-36' (H3K36me2). Mono-, di- and tri-methylates histone H3 at 'Lys-27' (H3K27me, H3K27me2, H3K27me3). Methylation of histone H3 at 'Lys-27' is controversial. May act as a transcription regulator that binds DNA and suppresses IL5 transcription through HDAC recruitment. The sequence is that of Histone-lysine N-methyltransferase NSD2 (Nsd2) from Mus musculus (Mouse).